The sequence spans 116 residues: Hydrogenase maturation factor HypA (116 aa).

Residue H2 coordinates Ni(2+). C73, C76, C89, and C92 together coordinate Zn(2+).

This sequence belongs to the HypA/HybF family.

Functionally, involved in the maturation of [NiFe] hydrogenases. Required for nickel insertion into the metal center of the hydrogenase. The protein is Hydrogenase maturation factor HypA of Chlorobium limicola (strain DSM 245 / NBRC 103803 / 6330).